The sequence spans 102 residues: Large ribosomal subunit protein bL21 (102 aa).

Belongs to the bacterial ribosomal protein bL21 family. Part of the 50S ribosomal subunit. Contacts protein L20.

Functionally, this protein binds to 23S rRNA in the presence of protein L20. The polypeptide is Large ribosomal subunit protein bL21 (Bifidobacterium animalis subsp. lactis (strain AD011)).